Here is a 512-residue protein sequence, read N- to C-terminus: Polyamine aminopropyltransferase (512 aa).

7 helical membrane passes run 19–39, 48–68, 76–96, 108–128, 151–171, 172–192, and 199–219; these read IVSICGIIFEVLFGALGSYIL, LTISLFLTGMGIGASLSEKFM, VWIEFCVALIGGFSSFIMFGI, YLYSITLIIGALTGVELPILI, AGGLIGGVLFVFLFRPYFGMV, KTAFLVGLINLTVALIVLWLF, and FIVHAVIGGVIGVLLIAGLFF. In terms of domain architecture, PABS spans 215–450; sequence AGLFFGEEMA…GNWGFVMASR (236 aa). The tract at residues 217 to 457 is spermidine synthase; that stretch reads LFFGEEMAFN…ASREEIDLDI (241 aa). Position 245 (Gln-245) interacts with S-methyl-5'-thioadenosine. Spermidine contacts are provided by His-275 and Asp-299. Residues Asp-319 and 353 to 354 contribute to the S-methyl-5'-thioadenosine site; that span reads DA. Asp-371 (proton acceptor) is an active-site residue.

This sequence belongs to the spermidine/spermine synthase family. Homodimer or homotetramer.

The protein localises to the cell membrane. It catalyses the reaction S-adenosyl 3-(methylsulfanyl)propylamine + putrescine = S-methyl-5'-thioadenosine + spermidine + H(+). It participates in amine and polyamine biosynthesis; spermidine biosynthesis; spermidine from putrescine: step 1/1. Catalyzes the irreversible transfer of a propylamine group from the amino donor S-adenosylmethioninamine (decarboxy-AdoMet) to putrescine (1,4-diaminobutane) to yield spermidine. The chain is Polyamine aminopropyltransferase from Oceanobacillus iheyensis (strain DSM 14371 / CIP 107618 / JCM 11309 / KCTC 3954 / HTE831).